The following is a 1004-amino-acid chain: Ephrin type-B receptor 2 (1004 aa).

The first 19 residues, 1–19, serve as a signal peptide directing secretion; it reads MGPLWFCCLPLALLPLLAA. Over 20–544 the chain is Extracellular; the sequence is VEETLMDSTT…QTSVQEKLPL (525 aa). Residues 21–203 form the Eph LBD domain; sequence EETLMDSTTA…FYRKCPRVIQ (183 aa). Intrachain disulfides connect C63–C185 and C98–C108. N-linked (GlcNAc...) asparagine glycosylation is found at N266, N337, N429, N478, and N483. Fibronectin type-III domains are found at residues 325–435 and 436–531; these read IPSA…TNQA and APSA…TMTE. Residues 545-565 form a helical membrane-spanning segment; it reads IIGSSAAGLVFLIAVVVIIIV. The Cytoplasmic segment spans residues 566 to 1004; sequence CNRRRGFERA…QMNQIQSVEV (439 aa). One can recognise a Protein kinase domain in the interval 639 to 902; it reads VKIEQVIGAG…QIVNTLDKMI (264 aa). ATP is bound by residues 645 to 653 and K671; that span reads IGAGEFGEV. Catalysis depends on D764, which acts as the Proton acceptor. The region spanning 931-995 is the SAM domain; it reads TSFNTVDEWL…LNSIQVMRAQ (65 aa). Residues 1002–1004 carry the PDZ-binding motif; that stretch reads VEV.

It belongs to the protein kinase superfamily. Tyr protein kinase family. Ephrin receptor subfamily. Heterotetramer upon binding of the ligand. The heterotetramer is composed of an ephrin dimer and a receptor dimer. Oligomerization is probably required to induce biological responses. Post-translationally, ligand binding induces cleavage by matrix metalloproteinases (MMPs) such as MMP7/MMP9, producing an EphB2/N-terminal fragment (NTF) and a C-terminal long fragment (EphB2-LF). EphB2-LF is further cleaved by MMPs, producing EphB2/CTF1 which is further cleaved by the PS1/gamma-secretase producing EphB2/CTF2. Wide tissue distribution throughout development and sustained expression in adult brain. The longer form (CEK5+) is specifically expressed in the central nervous system.

It is found in the cell membrane. Its subcellular location is the cell projection. The protein localises to the axon. It localises to the dendrite. The catalysed reaction is L-tyrosyl-[protein] + ATP = O-phospho-L-tyrosyl-[protein] + ADP + H(+). Receptor tyrosine kinase which binds promiscuously transmembrane ephrin-B family ligands residing on adjacent cells, leading to contact-dependent bidirectional signaling into neighboring cells. The signaling pathway downstream of the receptor is referred to as forward signaling while the signaling pathway downstream of the ephrin ligand is referred to as reverse signaling. Functions in axon guidance during development. In addition to axon guidance, also regulates dendritic spines development and maturation and stimulates the formation of excitatory synapses. The chain is Ephrin type-B receptor 2 (EPHB2) from Gallus gallus (Chicken).